Reading from the N-terminus, the 417-residue chain is Phosphoglycerate kinase 1 (417 aa).

N-acetylserine is present on Ser2. Ser2 and Ser4 each carry phosphoserine. Lys6 is subject to N6-succinyllysine. Lys11 is modified (N6-acetyllysine). (2R)-3-phosphoglycerate is bound by residues Val23, Asp24, Phe25, Asn26, Gln38, and Arg39. The mitochondrial targeting region exposed following cis-trans isomerization by PIN1 and recognized by the TOM complex for mitochondrial translocation of the protein stretch occupies residues 38-43 (QRIKAA). Position 48 is an N6-acetyllysine; alternate (Lys48). Lys48 carries the N6-succinyllysine; alternate modification. (2R)-3-phosphoglycerate-binding residues include Ser62, His63, Gly65, and Arg66. Lys75 is subject to N6-acetyllysine. A Phosphotyrosine modification is found at Tyr76. Residues Lys86 and Lys91 each carry the N6-acetyllysine modification. Lys97 carries the N6-acetyllysine; alternate modification. At Lys97 the chain carries N6-(2-hydroxyisobutyryl)lysine; alternate. Residues Leu122 and Arg123 each coordinate (2R)-3-phosphoglycerate. Lys131 is modified (N6-acetyllysine; alternate). Lys131 carries the N6-malonyllysine; alternate modification. Lys146 carries the N6-acetyllysine modification. Residues His170 and Arg171 each contribute to the (2R)-3-phosphoglycerate site. Lys191 is subject to N6-succinyllysine. Tyr196 carries the post-translational modification Phosphotyrosine. Lys199 is subject to N6-acetyllysine. Ser203 is modified (phosphoserine). ADP is bound at residue Gly214. Gly214 lines the CDP pocket. Positions 215 and 216 each coordinate AMP. Ala215 lines the ATP pocket. Ala215 is a binding site for Mg(2+). N6-(2-hydroxyisobutyryl)lysine is present on Lys216. Residues Ala218 and Asp219 each coordinate Mg(2+). CDP is bound at residue Asp219. AMP is bound at residue Lys220. Lys220 is a binding site for ATP. Lys220 is modified (N6-(2-hydroxyisobutyryl)lysine). Residue Gly238 participates in ADP binding. Gly238 is a CDP binding site. Position 239 (Gly239) interacts with AMP. Gly239 is an ATP binding site. N6-acetyllysine is present on residues Lys267 and Lys291. AMP is bound at residue Gly313. Residue Gly313 participates in ATP binding. Lys323 is subject to N6-(2-hydroxyisobutyryl)lysine. Residues Gly338, Val340, and Phe343 each contribute to the CDP site. Phe343 contributes to the ADP binding site. Residue Glu344 participates in AMP binding. Glu344 is an ATP binding site. N6-acetyllysine is present on Lys361. ATP contacts are provided by Asp375 and Thr376. Residue Asp375 coordinates Mg(2+).

It belongs to the phosphoglycerate kinase family. As to quaternary structure, monomer. Interacts with kinase MAPK1/ERK2; the interaction is direct, occurs under hypoxic conditions, and promotes its interaction with PIN1. Interacts with peptidyl-prolyl cis-trans isomerase PIN1; the interaction is direct, occurs under hypoxic conditions, and targets the protein to the mitochondrion by promoting interactions with the TOM complex. Interacts with mitochondrial circRNA mcPGK1 (via its 2nd stem-loop); the interaction is direct and targets the protein to the mitochondrion by promoting interactions with the TOM complex. Interacts with pyruvate dehydrogenase kinase PDK1; the interaction is direct, occurs under hypoxic conditions and leads to PDK1-mediated inhibition of pyruvate dehydrogenase complex activity. It depends on Mg(2+) as a cofactor. Phosphorylated at Ser-203 by MAPK1/ERK2 under hypoxic conditions, which promotes its mitochondrial targeting. In terms of tissue distribution, testis, lung, brain, skeletal muscle, liver, intestine, and kidney (at protein level).

The protein localises to the cytoplasm. Its subcellular location is the cytosol. The protein resides in the mitochondrion matrix. The catalysed reaction is (2R)-3-phosphoglycerate + ATP = (2R)-3-phospho-glyceroyl phosphate + ADP. It carries out the reaction L-seryl-[protein] + ATP = O-phospho-L-seryl-[protein] + ADP + H(+). It participates in carbohydrate degradation; glycolysis; pyruvate from D-glyceraldehyde 3-phosphate: step 2/5. Its function is as follows. Catalyzes one of the two ATP producing reactions in the glycolytic pathway via the reversible conversion of 1,3-diphosphoglycerate to 3-phosphoglycerate. Both L- and D- forms of purine and pyrimidine nucleotides can be used as substrates, but the activity is much lower on pyrimidines. In addition to its role as a glycolytic enzyme, it seems that PGK-1 acts as a polymerase alpha cofactor protein (primer recognition protein). Acts as a protein kinase when localized to the mitochondrion where it phosphorylates pyruvate dehydrogenase kinase PDK1 to inhibit pyruvate dehydrogenase complex activity and suppress the formation of acetyl-coenzyme A from pyruvate, and consequently inhibit oxidative phosphorylation and promote glycolysis. May play a role in sperm motility. This Mus musculus (Mouse) protein is Phosphoglycerate kinase 1 (Pgk1).